The sequence spans 248 residues: Probable transcriptional regulatory protein LAR_0538 (248 aa).

A disordered region spans residues 1-22 (MSGHSKWHNIQGRKNAQDAKRG).

This sequence belongs to the TACO1 family.

It localises to the cytoplasm. The chain is Probable transcriptional regulatory protein LAR_0538 from Limosilactobacillus reuteri subsp. reuteri (strain JCM 1112) (Lactobacillus reuteri).